A 158-amino-acid polypeptide reads, in one-letter code: Phosphopantetheine adenylyltransferase (158 aa).

Residue Thr-10 coordinates substrate. Residues 10–11 (TF) and His-18 each bind ATP. 3 residues coordinate substrate: Lys-42, Leu-74, and Arg-88. ATP contacts are provided by residues 89–91 (GLR), Glu-99, and 124–130 (NSFISST).

It belongs to the bacterial CoaD family. As to quaternary structure, homohexamer. It depends on Mg(2+) as a cofactor.

It is found in the cytoplasm. The catalysed reaction is (R)-4'-phosphopantetheine + ATP + H(+) = 3'-dephospho-CoA + diphosphate. It participates in cofactor biosynthesis; coenzyme A biosynthesis; CoA from (R)-pantothenate: step 4/5. Its function is as follows. Reversibly transfers an adenylyl group from ATP to 4'-phosphopantetheine, yielding dephospho-CoA (dPCoA) and pyrophosphate. This is Phosphopantetheine adenylyltransferase from Shewanella sediminis (strain HAW-EB3).